The sequence spans 91 residues: ATP synthase subunit c (91 aa).

2 consecutive transmembrane segments (helical) span residues Phe4 to Ile24 and Ile53 to Leu73.

This sequence belongs to the ATPase C chain family. As to quaternary structure, F-type ATPases have 2 components, F(1) - the catalytic core - and F(0) - the membrane proton channel. F(1) has five subunits: alpha(3), beta(3), gamma(1), delta(1), epsilon(1). F(0) has three main subunits: a(1), b(2) and c(10-14). The alpha and beta chains form an alternating ring which encloses part of the gamma chain. F(1) is attached to F(0) by a central stalk formed by the gamma and epsilon chains, while a peripheral stalk is formed by the delta and b chains.

It localises to the cell inner membrane. F(1)F(0) ATP synthase produces ATP from ADP in the presence of a proton or sodium gradient. F-type ATPases consist of two structural domains, F(1) containing the extramembraneous catalytic core and F(0) containing the membrane proton channel, linked together by a central stalk and a peripheral stalk. During catalysis, ATP synthesis in the catalytic domain of F(1) is coupled via a rotary mechanism of the central stalk subunits to proton translocation. Functionally, key component of the F(0) channel; it plays a direct role in translocation across the membrane. A homomeric c-ring of between 10-14 subunits forms the central stalk rotor element with the F(1) delta and epsilon subunits. This is ATP synthase subunit c from Geobacter sulfurreducens (strain ATCC 51573 / DSM 12127 / PCA).